The primary structure comprises 152 residues: MATEEDVKQRQIIESRARNISHNVRCTECGSQSIEDSQADIAILLRKLIRDEIKSGKSDKEIYKKLQADYGETILYTPKFDLQTAAIWLSPVIVGGVAAGVWAYQKHRQRTNVHIMALNLVRGVPLTPREKETMLDVLTPPPPANKWWWPGK.

Residues methionine 1–glutamine 83 lie on the Mitochondrial intermembrane side of the membrane. Heme is bound by residues cysteine 26 and cysteine 29. The helical transmembrane segment at threonine 84–tyrosine 104 threads the bilayer. Residues glutamine 105–lysine 152 lie on the Mitochondrial matrix side of the membrane.

Belongs to the CcmH/CycL/Ccl2/NrfF family.

The protein resides in the mitochondrion inner membrane. Its function is as follows. Plays a role in mitochondrial cytochrome c maturation. Probable component of a heme lyase complex involved in the reduction of apocytochrome c. In Oryza sativa subsp. japonica (Rice), this protein is Cytochrome c-type biogenesis CcmH-like mitochondrial protein.